Consider the following 230-residue polypeptide: MESGIPTYREKQTGFWACHNPERLETAKAFRENPSLVWGWYLWRRQQFSKAQPNAAHLALREMAGSMGTVSIITQNIDDLHERAGSVDVLHLHGSLSKPKCFACHRPGMVRNESAIMEEGALIEPPRCTRCNGKLRPGVVWYGEDLLPDVWKSALSLVKSCDVLISVGTSGIVTPAADLPNIALACGATVIHVNTVDVGMGAPNEIMLIGRATQILSHLSAFLSRELNSP.

The Deacetylase sirtuin-type domain occupies 1–226; it reads MESGIPTYRE…SHLSAFLSRE (226 aa). Substrate is bound by residues Y41 and R44. Position 75-78 (75-78) interacts with NAD(+); that stretch reads QNID. Residue H93 is the Proton acceptor of the active site. Residues C101, C104, C128, and C131 each contribute to the Zn(2+) site. NAD(+) is bound by residues 168 to 170, 194 to 196, and A212; these read GTS and NTV.

It belongs to the sirtuin family. Class III subfamily. The cofactor is Zn(2+).

It is found in the cytoplasm. It catalyses the reaction N(6)-acetyl-L-lysyl-[protein] + NAD(+) + H2O = 2''-O-acetyl-ADP-D-ribose + nicotinamide + L-lysyl-[protein]. It carries out the reaction N(6)-succinyl-L-lysyl-[protein] + NAD(+) + H2O = 2''-O-succinyl-ADP-D-ribose + nicotinamide + L-lysyl-[protein]. Its function is as follows. NAD-dependent lysine deacetylase and desuccinylase that specifically removes acetyl and succinyl groups on target proteins. Modulates the activities of several proteins which are inactive in their acylated form. The protein is NAD-dependent protein deacylase 1 of Pseudomonas syringae pv. tomato (strain ATCC BAA-871 / DC3000).